The sequence spans 171 residues: Methylated-DNA--protein-cysteine methyltransferase (171 aa).

Catalysis depends on Cys139, which acts as the Nucleophile; methyl group acceptor.

It belongs to the MGMT family.

It is found in the cytoplasm. It carries out the reaction a 6-O-methyl-2'-deoxyguanosine in DNA + L-cysteinyl-[protein] = S-methyl-L-cysteinyl-[protein] + a 2'-deoxyguanosine in DNA. The catalysed reaction is a 4-O-methyl-thymidine in DNA + L-cysteinyl-[protein] = a thymidine in DNA + S-methyl-L-cysteinyl-[protein]. Involved in the cellular defense against the biological effects of O6-methylguanine (O6-MeG) and O4-methylthymine (O4-MeT) in DNA. Repairs the methylated nucleobase in DNA by stoichiometrically transferring the methyl group to a cysteine residue in the enzyme. This is a suicide reaction: the enzyme is irreversibly inactivated. This chain is Methylated-DNA--protein-cysteine methyltransferase, found in Salmonella typhi.